A 349-amino-acid chain; its full sequence is Quinolinate synthase (349 aa).

Residues His52 and Ser69 each contribute to the iminosuccinate site. Cys114 contributes to the [4Fe-4S] cluster binding site. Residues 140–142 (YFN) and Ser157 each bind iminosuccinate. Residue Cys201 participates in [4Fe-4S] cluster binding. Iminosuccinate-binding positions include 227-229 (HPE) and Thr255. Cys300 contacts [4Fe-4S] cluster.

The protein belongs to the quinolinate synthase family. Type 2 subfamily. The cofactor is [4Fe-4S] cluster.

Its subcellular location is the cytoplasm. It catalyses the reaction iminosuccinate + dihydroxyacetone phosphate = quinolinate + phosphate + 2 H2O + H(+). Its pathway is cofactor biosynthesis; NAD(+) biosynthesis; quinolinate from iminoaspartate: step 1/1. In terms of biological role, catalyzes the condensation of iminoaspartate with dihydroxyacetone phosphate to form quinolinate. This is Quinolinate synthase from Mycolicibacterium paratuberculosis (strain ATCC BAA-968 / K-10) (Mycobacterium paratuberculosis).